Reading from the N-terminus, the 300-residue chain is Glycine betaine/carnitine transport binding protein GbuC (300 aa).

The N-terminal stretch at 1 to 20 (MLKKLITTAVLAMLIFTLAA) is a signal peptide. Cys21 carries the N-palmitoyl cysteine lipid modification. A lipid anchor (S-diacylglycerol cysteine) is attached at Cys21.

As to quaternary structure, the complex is composed of two ATP-binding proteins (GbuA), two transmembrane proteins (GbuB) and a solute-binding protein (GbuC).

Its subcellular location is the cell membrane. With respect to regulation, the complex is activated by an osmotic gradient or by low temperature. In terms of biological role, part of the ABC transporter complex GbuABC involved in glycine betaine uptake. Involved, with BetL and OpuC, in osmoprotection and cryoprotection of Listeria. Can also uptake carnitine when carnitine is abundant in the growth medium. In Listeria monocytogenes serotype 1/2a (strain 10403S), this protein is Glycine betaine/carnitine transport binding protein GbuC (gbuC).